A 285-amino-acid chain; its full sequence is Troponin T, cardiac muscle (285 aa).

Residues 1–58 (MSDVEEAVEEYEEQEEAAEEEHEEAVEEEAGGEAEAGEPCTAEDGEEEEGREAEDGPV) show a composition bias toward acidic residues. Disordered regions lie at residues 1–83 (MSDV…GERV) and 111–206 (RKKE…EKKK). Position 2 is an N-acetylserine (S2). The residue at position 2 (S2) is a Phosphoserine; by CK2. Positions 66–77 (RPFMPNLVPPKI) are enriched in pro residues. 2 stretches are compositionally biased toward basic and acidic residues: residues 111-171 (RKKE…DEAR) and 190-206 (QTER…EKKK). T191 is modified (phosphothreonine; by PKC/PRKCA). S195 is subject to Phosphoserine; by PKC/PRKCA. Residue T200 is modified to Phosphothreonine; by PKC/PRKCA and RAF1. T281 is subject to Phosphothreonine; by PKC/PRKCA.

Belongs to the troponin T family. Post-translationally, the N-terminus is blocked. Phosphorylation at Thr-200 by PRKCA induces significant reduction in myofilament calcium sensitivity and actomyosin ATPase activity.

In terms of biological role, troponin T is the tropomyosin-binding subunit of troponin, the thin filament regulatory complex which confers calcium-sensitivity to striated muscle actomyosin ATPase activity. This is Troponin T, cardiac muscle (TNNT2) from Bos taurus (Bovine).